Reading from the N-terminus, the 390-residue chain is Outer membrane protein assembly factor BamB (390 aa).

Residues 1–25 form the signal peptide; sequence MPVLRDRIPRRGFFLGLALLAALSG. The N-palmitoyl cysteine moiety is linked to residue Cys26. Cys26 carries S-diacylglycerol cysteine lipidation.

This sequence belongs to the BamB family. In terms of assembly, part of the Bam complex.

It localises to the cell outer membrane. In terms of biological role, part of the outer membrane protein assembly complex, which is involved in assembly and insertion of beta-barrel proteins into the outer membrane. This chain is Outer membrane protein assembly factor BamB, found in Marinobacter adhaerens (strain DSM 23420 / HP15).